The chain runs to 676 residues: WD repeat-containing protein 48 (676 aa).

A Phosphotyrosine modification is found at Tyr28. 8 WD repeats span residues 28–67 (YNRN…QDPY), 73–112 (HHTD…CMST), 115–154 (THKD…ALTA), 166–205 (GNKD…KLMK), 208–247 (GHTD…CIAT), 250–289 (VHDE…IRVL), 292–334 (EEKA…NFRA), and 358–397 (KGGA…KVED). Position 214 is an N6-acetyllysine (Lys214). Lys578 bears the N6-acetyllysine mark. Residues 607 to 628 (LDNESQTTSSSNNEKPEQEKEE) form a disordered region. Low complexity predominate over residues 609–619 (NESQTTSSSNN). The residue at position 613 (Thr613) is a Phosphothreonine.

The protein belongs to the WD repeat WDR48 family. As to quaternary structure, interacts with USP46. Interacts with USP1. Interacts with USP12. Component of the USP12-WDR20-WDR48 deubiquitinating complex. Component of the USP12-DMWD-WDR48 deubiquitinating complex. Interacts with PHLPP1. Interacts with RAD51AP1; the interaction is direct and promotes formation of a trimeric complex with RAD51 via RAD51AP1. Interacts with ATAD5; the interaction regulates USP1-mediated PCNA deubiquitination. Interacts with RAD51; the interaction is enhanced under replication stress. Interacts with ITCH; the interaction is more efficient when both USP12 and WDR48/UAF1 are involved and may facilitate recruitment of the USP12 deubiquitinating complex to Notch.

It is found in the nucleus. The protein resides in the cytoplasm. The protein localises to the lysosome. Its subcellular location is the late endosome. In terms of biological role, regulator of deubiquitinating complexes, which acts as a strong activator of USP1, USP12 and USP46. Enhances the USP1-mediated deubiquitination of FANCD2; USP1 being almost inactive by itself. Activates deubiquitination by increasing the catalytic turnover without increasing the affinity of deubiquitinating enzymes for the substrate. Also activates deubiquitinating activity of complexes containing USP12. Docks at the distal end of the USP12 fingers domain and induces a cascade of structural changes leading to the activation of the enzyme. Together with RAD51AP1, promotes DNA repair by stimulating RAD51-mediated homologous recombination. Binds single-stranded DNA (ssDNA) and double-stranded DNA (dsDNA). DNA-binding is required both for USP1-mediated deubiquitination of FANCD2 and stimulation of RAD51-mediated homologous recombination: both WDR48/UAF1 and RAD51AP1 have coordinated role in DNA-binding during these processes. Together with ATAD5 and by regulating USP1 activity, has a role in PCNA-mediated translesion synthesis (TLS) by deubiquitinating monoubiquitinated PCNA. Together with ATAD5, has a role in recruiting RAD51 to stalled forks during replication stress. The chain is WD repeat-containing protein 48 (Wdr48) from Mus musculus (Mouse).